Reading from the N-terminus, the 569-residue chain is CTP synthase (569 aa).

The 257-residue stretch at 313 to 569 (RIAMVGKYTG…NASLERLKKM (257 aa)) folds into the Glutamine amidotransferase type-1 domain. The active-site Nucleophile is the Cys410. Active-site residues include His541 and Glu543.

It belongs to the CTP synthase family.

The enzyme catalyses UTP + L-glutamine + ATP + H2O = CTP + L-glutamate + ADP + phosphate + 2 H(+). The protein operates within pyrimidine metabolism; CTP biosynthesis via de novo pathway; CTP from UDP: step 2/2. In terms of biological role, catalyzes the ATP-dependent amination of UTP to CTP with either L-glutamine or ammonia as the source of nitrogen. The sequence is that of CTP synthase (ctps) from Dictyostelium discoideum (Social amoeba).